The following is a 415-amino-acid chain: Casein kinase 1-like protein 3 (415 aa).

Positions 9–277 (YKLGRKIGGG…FLKRLFRDLF (269 aa)) constitute a Protein kinase domain. Residues 15–23 (IGGGSFGEI) and Lys-38 contribute to the ATP site. Asp-128 functions as the Proton acceptor in the catalytic mechanism. Polar residues-rich tracts occupy residues 303–314 (NQSQAVPGSSNP) and 373–415 (NMPS…SPEK). Disordered stretches follow at residues 303 to 330 (NQSQAVPGSSNPRAMPVDTSNHRGGPNI) and 344 to 415 (NAIG…SPEK).

The protein belongs to the protein kinase superfamily. CK1 Ser/Thr protein kinase family. Casein kinase I subfamily. Slightly autophosphorylated. Expressed in seedlings, stems, leaves and flowers.

The protein resides in the cytoplasm. It localises to the nucleus. It catalyses the reaction L-seryl-[protein] + ATP = O-phospho-L-seryl-[protein] + ADP + H(+). It carries out the reaction L-threonyl-[protein] + ATP = O-phospho-L-threonyl-[protein] + ADP + H(+). Functionally, protein kinase involved in blue light responses (e.g. hypocotyl elongation and flowering) by phosphorylating CRY2 to reduce its stability. This chain is Casein kinase 1-like protein 3, found in Arabidopsis thaliana (Mouse-ear cress).